The chain runs to 78 residues: Large ribosomal subunit protein eL20 (78 aa).

Belongs to the eukaryotic ribosomal protein eL20 family. In terms of assembly, part of the 50S ribosomal subunit. Binds 23S rRNA.

In Pyrobaculum islandicum (strain DSM 4184 / JCM 9189 / GEO3), this protein is Large ribosomal subunit protein eL20.